A 919-amino-acid polypeptide reads, in one-letter code: Isoleucine--tRNA ligase (919 aa).

The 'HIGH' region signature appears at 57-67; it reads PYANGHTHIGH. An L-isoleucyl-5'-AMP-binding site is contributed by glutamate 569. Residues 610-614 carry the 'KMSKS' region motif; that stretch reads KMSKS. Lysine 613 provides a ligand contact to ATP. Zn(2+) contacts are provided by cysteine 895, cysteine 898, cysteine 910, and cysteine 913.

It belongs to the class-I aminoacyl-tRNA synthetase family. IleS type 1 subfamily. Monomer. It depends on Zn(2+) as a cofactor.

The protein resides in the cytoplasm. The enzyme catalyses tRNA(Ile) + L-isoleucine + ATP = L-isoleucyl-tRNA(Ile) + AMP + diphosphate. Its function is as follows. Catalyzes the attachment of isoleucine to tRNA(Ile). As IleRS can inadvertently accommodate and process structurally similar amino acids such as valine, to avoid such errors it has two additional distinct tRNA(Ile)-dependent editing activities. One activity is designated as 'pretransfer' editing and involves the hydrolysis of activated Val-AMP. The other activity is designated 'posttransfer' editing and involves deacylation of mischarged Val-tRNA(Ile). The chain is Isoleucine--tRNA ligase from Sulfurimonas denitrificans (strain ATCC 33889 / DSM 1251) (Thiomicrospira denitrificans (strain ATCC 33889 / DSM 1251)).